The sequence spans 446 residues: MAAQVTDALKNLKVKDPNSVIESAAEAKSNGNTQAEAEDSDDEEEEPVNGEGAGEGGAKKKRKRKKKPKKKAGANPKVQSSPPRVLLSNLFPSGEYPVGEEVEYRDENNYRTTSEEKRYLDRMNNDFLQEYRQAAEIHRQVRQYAKANIKPGQTLTEIAEGIEDSVRALTGHPGLEEGDNIKGGVAFPTGVNLDHIAAHYSPNAGNKTVLAYENVMKVDFGVHVNGRIVDSAFTIAFDPMYDNLLEAVKQATNTGIKEAGIDARLGEIGEHIQETMESYEVEIKGQTYQVKPIRNLNGHDILQWKIHGGKSVPIVKSNDQTKMEEGEVFAIETFGSTGNGYVRDDLECSHYAKVADAPNVPLRIASAGKLLNVINKNFGTLPFCRRYLDRLGQDKYLLGLNALVSHGIVQDYPPLVDKKGSYTAQFEHTIVLRPNCKEVISRGDDY.

Residues 1-91 (MAAQVTDALK…PPRVLLSNLF (91 aa)) are disordered. Acidic residues predominate over residues 36 to 48 (EAEDSDDEEEEPV). The span at 59–72 (KKKRKRKKKPKKKA) shows a compositional bias: basic residues. Position 199 (histidine 199) interacts with substrate. Residues aspartate 219, aspartate 230, and histidine 299 each coordinate a divalent metal cation. Histidine 307 is a substrate binding site. Residues glutamate 332 and glutamate 427 each contribute to the a divalent metal cation site.

It belongs to the peptidase M24A family. Methionine aminopeptidase eukaryotic type 2 subfamily. It depends on Co(2+) as a cofactor. Zn(2+) serves as cofactor. The cofactor is Mn(2+). Fe(2+) is required as a cofactor.

It localises to the cytoplasm. It catalyses the reaction Release of N-terminal amino acids, preferentially methionine, from peptides and arylamides.. Functionally, cotranslationally removes the N-terminal methionine from nascent proteins. The N-terminal methionine is often cleaved when the second residue in the primary sequence is small and uncharged (Met-Ala-, Cys, Gly, Pro, Ser, Thr, or Val). This is Methionine aminopeptidase 2 from Sclerotinia sclerotiorum (strain ATCC 18683 / 1980 / Ss-1) (White mold).